A 552-amino-acid polypeptide reads, in one-letter code: Mothers against decapentaplegic homolog 4 (552 aa).

The tract at residues 1 to 322 (MDNMSITNTP…PISNHPAPEY (322 aa)) is mediates interaction with ZBTB7A. The region spanning 18 to 142 (SIVHSLMCHR…YERVVSPGID (125 aa)) is the MH1 domain. Lysine 37 carries the N6-acetyllysine modification. Positions 44–69 (VKKLKEKKDELDSLITAITTNGAHPS) are required for interaction with TSC22D1. Cysteine 71 is a binding site for Zn(2+). A Glycyl lysine isopeptide (Lys-Gly) (interchain with G-Cter in SUMO2) cross-link involves residue lysine 113. Zn(2+) contacts are provided by cysteine 115, cysteine 127, and histidine 132. Positions 264 to 297 (STTTWTGSRTAPYPPNLPHHQNGHLQHHPPMPPH) are disordered. The interval 275-320 (PYPPNLPHHQNGHLQHHPPMPPHPGHYWPVHNELAFQPPISNHPAP) is SAD. One can recognise an MH2 domain in the interval 323-552 (WCSIAYFEMD…MPIADPQPLD (230 aa)). N6-acetyllysine occurs at positions 428 and 507. A Glycyl lysine isopeptide (Lys-Gly) (interchain with G-Cter in ubiquitin) cross-link involves residue lysine 519.

The protein belongs to the dwarfin/SMAD family. In terms of assembly, monomer; in the absence of TGF-beta activation. Heterotrimer; on TGF-beta activation. Heterotrimer composed of two molecules of a C-terminally phosphorylated R-SMAD molecule, SMAD2 or SMAD3, and one molecule of SMAD4 to form the transcriptional active SMAD2/SMAD3-SMAD4 complex. Found in a ternary complex composed of SMAD4, STK11/LKB1 and STK11IP. Found in a complex with SMAD1 and YY1. Identified in a complex that contains at least ZNF451, SMAD2, SMAD3 and SMAD4. Interacts with ATF2, COPS5, DACH1, MSG1, SKI, STK11/LKB1, STK11IP and TRIM33. Associates with ZNF423 or ZNF521 in response to BMP2 leading to activate transcription of BMP target genes. Interacts with USP9X. Interacts with RBPMS. Interacts with WWTR1 (via coiled-coil domain). Interacts with CITED1 and CITED2. Interacts with PDPK1 (via PH domain). Interacts with VPS39; this interaction affects heterodimer formation with SMAD3, but not with SMAD2, and leads to inhibition of SMAD3-dependent transcription activation. Interactions with VPS39 and SMAD2 may be mutually exclusive. Interacts (via MH2 domain) with ZNF451 (via N-terminal zinc-finger domains). Interacts with ZC3H3. Interacts weakly with ZNF8. Interacts with NUP93 and IPO7; translocates SMAD4 to the nucleus through the NPC upon BMP7 stimulation resulting in activation of SMAD4 signaling. Interacts with CREB3L1, the interaction takes place upon TGFB1 induction and SMAD4 acts as a CREB3L1 coactivator to induce the expression of genes involved in the assembly of collagen extracellular matrix. Interacts with DLX1. Interacts with ZBTB7A; the interaction is direct and stimulated by TGFB1. Interacts with CREBBP; the recruitment of this transcriptional coactivator is negatively regulated by ZBTB7A. Interacts with EP300; the interaction with this transcriptional coactivator is negatively regulated by ZBTB7A. Interacts with HDAC1. Interacts (via MH2 domain) with ZMIZ1 (via SP-RING-type domain); in the TGF-beta signaling pathway increases the activity of the SMAD3/SMAD4 transcriptional complex. Interacts (via N-terminus) with TSC22D1. Phosphorylated by PDPK1. In terms of processing, monoubiquitinated on Lys-519 by E3 ubiquitin-protein ligase TRIM33. Monoubiquitination hampers its ability to form a stable complex with activated SMAD2/3 resulting in inhibition of TGF-beta/BMP signaling cascade. Deubiquitination by USP9X restores its competence to mediate TGF-beta signaling.

It is found in the cytoplasm. The protein resides in the nucleus. Functionally, common SMAD (co-SMAD) is the coactivator and mediator of signal transduction by TGF-beta (transforming growth factor). Component of the heterotrimeric SMAD2/SMAD3-SMAD4 complex that forms in the nucleus and is required for the TGF-mediated signaling. Promotes binding of the SMAD2/SMAD4/FAST-1 complex to DNA and provides an activation function required for SMAD1 or SMAD2 to stimulate transcription. Component of the multimeric SMAD3/SMAD4/JUN/FOS complex which forms at the AP1 promoter site; required for synergistic transcriptional activity in response to TGF-beta. Acts synergistically with SMAD1 and YY1 in bone morphogenetic protein (BMP)-mediated cardiac-specific gene expression. Binds to SMAD binding elements (SBEs) (5'-GTCT/AGAC-3') within BMP response element (BMPRE) of cardiac activating regions. May act as a tumor suppressor. Positively regulates PDPK1 kinase activity by stimulating its dissociation from the 14-3-3 protein YWHAQ which acts as a negative regulator. In muscle physiology, plays a central role in the balance between atrophy and hypertrophy. When recruited by MSTN, promotes atrophy response via phosphorylated SMAD2/4. MSTN decrease causes SMAD4 release and subsequent recruitment by the BMP pathway to promote hypertrophy via phosphorylated SMAD1/5/8. This chain is Mothers against decapentaplegic homolog 4 (SMAD4), found in Sus scrofa (Pig).